Here is a 727-residue protein sequence, read N- to C-terminus: ATP-dependent zinc metalloprotease FtsH (727 aa).

The Cytoplasmic portion of the chain corresponds to 1–6; the sequence is MQKAFR. Residues 7–27 form a helical membrane-spanning segment; the sequence is NVLVIAIIGVIIFGVFSYING. Over 28–110 the chain is Extracellular; that stretch reads NGNTPKQLSY…KVKEEEKQSV (83 aa). The helical transmembrane segment at 111-131 threads the bilayer; the sequence is FVSMLTTLIPVLIIAFLFIFF. Residues 132 to 727 lie on the Cytoplasmic side of the membrane; it reads LSQAQGGGGG…PNDPNNPSNR (596 aa). 205–212 is a binding site for ATP; sequence GPPGTGKT. Histidine 427 contributes to the Zn(2+) binding site. Glutamate 428 is a catalytic residue. Residues histidine 431 and aspartate 503 each contribute to the Zn(2+) site. 2 stretches are compositionally biased toward basic and acidic residues: residues 645–684 and 691–706; these read LEEG…DQLR and NDQH…DTGH. The segment at 645 to 727 is disordered; the sequence is LEEGKEDMRE…PNDPNNPSNR (83 aa). Over residues 710 to 727 the composition is skewed to low complexity; the sequence is PNIDKPYNPNDPNNPSNR.

It in the central section; belongs to the AAA ATPase family. This sequence in the C-terminal section; belongs to the peptidase M41 family. As to quaternary structure, homohexamer. Zn(2+) serves as cofactor.

It localises to the cell membrane. Functionally, acts as a processive, ATP-dependent zinc metallopeptidase for both cytoplasmic and membrane proteins. Plays a role in the quality control of integral membrane proteins. This Staphylococcus haemolyticus (strain JCSC1435) protein is ATP-dependent zinc metalloprotease FtsH.